The primary structure comprises 158 residues: Anaerobic ribonucleoside-triphosphate reductase-activating protein (158 aa).

[4Fe-4S] cluster-binding residues include cysteine 26, cysteine 30, and cysteine 33. S-adenosyl-L-methionine is bound by residues 32–34 (GCY) and glycine 74.

This sequence belongs to the organic radical-activating enzymes family. In terms of assembly, forms a tetramer composed of two NrdD and two NrdG subunits. The cofactor is [4Fe-4S] cluster.

It localises to the cytoplasm. The enzyme catalyses glycyl-[protein] + reduced [flavodoxin] + S-adenosyl-L-methionine = glycin-2-yl radical-[protein] + semiquinone [flavodoxin] + 5'-deoxyadenosine + L-methionine + H(+). Its function is as follows. Activation of anaerobic ribonucleoside-triphosphate reductase under anaerobic conditions by generation of an organic free radical, using S-adenosylmethionine and reduced flavodoxin as cosubstrates to produce 5'-deoxy-adenosine. The protein is Anaerobic ribonucleoside-triphosphate reductase-activating protein (nrdG) of Pasteurella multocida (strain Pm70).